We begin with the raw amino-acid sequence, 328 residues long: Gonadotropin-releasing hormone receptor (328 aa).

Residues 1–38 lie on the Extracellular side of the membrane; that stretch reads MANGDSPDQNENHCSAINSSILLTPGSLPTLTLSGKIR. N-linked (GlcNAc...) asparagine glycosylation is present at asparagine 18. Residues 39 to 58 form a helical membrane-spanning segment; that stretch reads VTVTFFLFLLSTIFNTSFLL. Residues 59–77 lie on the Cytoplasmic side of the membrane; it reads KLQNWTQRKEKRKKLSKMK. Residues 78-97 form a helical membrane-spanning segment; the sequence is VLLKHLTLANLLETLIVMPL. Residues 98–115 are Extracellular-facing; that stretch reads DGMWNITVQWYAGELLCK. Asparagine 102 carries an N-linked (GlcNAc...) asparagine glycan. Residues cysteine 114 and cysteine 196 are joined by a disulfide bond. The chain crosses the membrane as a helical span at residues 116–137; sequence VLSYLKLFSMYAPAFMMVVISL. At 138 to 164 the chain is on the cytoplasmic side; sequence DRSLAITRPLAVKSNSKLGQFMIGLAW. A helical membrane pass occupies residues 165–184; it reads LLSSIFAGPQLYIFGMIHLA. Residues 185–212 lie on the Extracellular side of the membrane; sequence DDSGQTEGFSQCVTHCSFPQWWHQAFYN. A helical membrane pass occupies residues 213 to 232; sequence FFTFSCLFIIPLLIMLICNA. Over 233 to 281 the chain is Cytoplasmic; that stretch reads KIIFTLTRVLHQDPHKLQLNQSKNNIPQARLRTLKMTVAFATSFTVCWT. A helical membrane pass occupies residues 282–300; it reads PYYVLGIWYWFDPDMVNRV. Residues 301–306 lie on the Extracellular side of the membrane; it reads SDPVNH. The chain crosses the membrane as a helical span at residues 307-326; sequence FFFLFAFLNPCFDPLIYGYF. Residues 327-328 lie on the Cytoplasmic side of the membrane; the sequence is SL.

Belongs to the G-protein coupled receptor 1 family.

It localises to the cell membrane. Functionally, receptor for gonadotropin releasing hormone (GnRH) that mediates the action of GnRH to stimulate the secretion of the gonadotropic hormones luteinizing hormone (LH) and follicle-stimulating hormone (FSH). This receptor mediates its action by association with G-proteins that activate a phosphatidylinositol-calcium second messenger system. This Ovis aries (Sheep) protein is Gonadotropin-releasing hormone receptor (GNRHR).